The sequence spans 143 residues: Transcription antitermination protein NusB (143 aa).

The protein belongs to the NusB family.

Involved in transcription antitermination. Required for transcription of ribosomal RNA (rRNA) genes. Binds specifically to the boxA antiterminator sequence of the ribosomal RNA (rrn) operons. The polypeptide is Transcription antitermination protein NusB (Buchnera aphidicola subsp. Acyrthosiphon pisum (strain APS) (Acyrthosiphon pisum symbiotic bacterium)).